The sequence spans 199 residues: Recombination protein RecR (199 aa).

The C4-type zinc-finger motif lies at 57-72 (CQSCRTFTEETYCPIC). The Toprim domain maps to 81–176 (SVICVVETPA…AVSRIAHGVP (96 aa)).

It belongs to the RecR family.

May play a role in DNA repair. It seems to be involved in an RecBC-independent recombinational process of DNA repair. It may act with RecF and RecO. This is Recombination protein RecR from Shewanella piezotolerans (strain WP3 / JCM 13877).